A 200-amino-acid polypeptide reads, in one-letter code: Pyridoxine/pyridoxamine 5'-phosphate oxidase (200 aa).

Residues 48-53, 63-64, Lys-70, and Gln-92 each bind FMN; these read RMVLLK and YT. Lys-53 is a binding site for substrate. 3 residues coordinate substrate: Tyr-110, Arg-114, and Ser-118. FMN contacts are provided by residues 127–128 and Trp-171; that span reads QS. Residue 177 to 179 participates in substrate binding; that stretch reads RLH. Arg-181 contacts FMN.

Belongs to the pyridoxamine 5'-phosphate oxidase family. In terms of assembly, homodimer. It depends on FMN as a cofactor.

It catalyses the reaction pyridoxamine 5'-phosphate + O2 + H2O = pyridoxal 5'-phosphate + H2O2 + NH4(+). It carries out the reaction pyridoxine 5'-phosphate + O2 = pyridoxal 5'-phosphate + H2O2. It functions in the pathway cofactor metabolism; pyridoxal 5'-phosphate salvage; pyridoxal 5'-phosphate from pyridoxamine 5'-phosphate: step 1/1. Its pathway is cofactor metabolism; pyridoxal 5'-phosphate salvage; pyridoxal 5'-phosphate from pyridoxine 5'-phosphate: step 1/1. Catalyzes the oxidation of either pyridoxine 5'-phosphate (PNP) or pyridoxamine 5'-phosphate (PMP) into pyridoxal 5'-phosphate (PLP). The chain is Pyridoxine/pyridoxamine 5'-phosphate oxidase from Cereibacter sphaeroides (strain ATCC 17023 / DSM 158 / JCM 6121 / CCUG 31486 / LMG 2827 / NBRC 12203 / NCIMB 8253 / ATH 2.4.1.) (Rhodobacter sphaeroides).